The following is an 802-amino-acid chain: Copper-exporting P-type ATPase (802 aa).

HMA domains follow at residues 5 to 71 (KEIA…YHVV) and 73 to 139 (EKAE…YKLK). The Cu(+) site is built by cysteine 16, cysteine 19, cysteine 84, and cysteine 87. 6 helical membrane-spanning segments follow: residues 162–181 (LIFS…SHFT), 196–218 (WMQF…VGAY), 230–249 (VLVA…LTFQ), 259–278 (GLYY…GKLF), 412–434 (ISGI…WYLW), and 447–469 (FIAV…SIMA). Aspartate 499 acts as the 4-aspartylphosphate intermediate in catalysis. Aspartate 698 and aspartate 702 together coordinate Mg(2+). 2 helical membrane-spanning segments follow: residues 756-775 (LFWA…LGFL) and 779-796 (IAGA…LNAL).

The protein belongs to the cation transport ATPase (P-type) (TC 3.A.3) family. Type IB subfamily. In terms of assembly, monomer at sub-stoichiometric copper concentrations. Homodimer at higher copper concentrations. Forms a heterodimer (electrostatic interactions) with CopZ during the transfer of Cu(+).

The protein localises to the cell membrane. It catalyses the reaction Cu(+)(in) + ATP + H2O = Cu(+)(out) + ADP + phosphate + H(+). Involved in copper export. The protein is Copper-exporting P-type ATPase (copA) of Bacillus subtilis (strain 168).